The chain runs to 497 residues: MIRNSMKSHTELLSWNLLQKEADRVRLNSDSLTCVVPDSNNYESSKQINCIEYDYSRQRVNRTIIDLLIDLANEVKLQEKIDNLINGKKINISENRPALHTALRDLGNKSIMIDGLDIMSAVINTREKIKVISNQIREKKWLGHSGLPITDIVNIGIGGSDLGPRVCINALSNYISKEFNYHFISDVDPASFNDVIAKINPQTTLFIVSSKSFTTKETLLNARKAFALYEDTASIDQHFIAVTAHPERAYQMGIKTVLPIWDWVGGRFSFCSAVNLITAIAIGYEQFVELLAGAHDIDTHVQFTDFKNNIPVLMALIGIWNNNFLNIHYDLIGYNFKEYFVPYVQQLDMESNGKSIDVNGRMVDYATGPIVWGGLGNQAQHSYFQLLCQGTHRCVGDFITLKTNDEHEINSMCHYKMKVLSEGIQTIENPYGYIPGNMPMNHLILSDCSPYTLGALVALYEHKIFEQSVIWNINPFDQPGIESAKSAHREITLSSES.

Catalysis depends on glutamate 350, which acts as the Proton donor. Active-site residues include histidine 381 and lysine 485.

The protein belongs to the GPI family.

It localises to the cytoplasm. The enzyme catalyses alpha-D-glucose 6-phosphate = beta-D-fructose 6-phosphate. It participates in carbohydrate biosynthesis; gluconeogenesis. The protein operates within carbohydrate degradation; glycolysis; D-glyceraldehyde 3-phosphate and glycerone phosphate from D-glucose: step 2/4. Catalyzes the reversible isomerization of glucose-6-phosphate to fructose-6-phosphate. The protein is Glucose-6-phosphate isomerase of Legionella pneumophila.